We begin with the raw amino-acid sequence, 90 residues long: Large ribosomal subunit protein eL31 (90 aa).

It belongs to the eukaryotic ribosomal protein eL31 family.

This chain is Large ribosomal subunit protein eL31, found in Thermococcus gammatolerans (strain DSM 15229 / JCM 11827 / EJ3).